Reading from the N-terminus, the 201-residue chain is Retinol-binding protein 4 (201 aa).

The signal sequence occupies residues 1-18 (MEWVWALVVLAALGSAGA). Cystine bridges form between Cys-22/Cys-178, Cys-88/Cys-192, and Cys-138/Cys-147. Substrate is bound at residue Gln-116. Arg-139 is subject to Omega-N-methylarginine.

Belongs to the calycin superfamily. Lipocalin family. Interacts with TTR. Interaction with TTR prevents its loss by filtration through the kidney glomeruli. Interacts with STRA6.

The protein resides in the secreted. Functionally, retinol-binding protein that mediates retinol transport in blood plasma. Delivers retinol from the liver stores to the peripheral tissues. Transfers the bound all-trans retinol to STRA6, that then facilitates retinol transport across the cell membrane. In Equus caballus (Horse), this protein is Retinol-binding protein 4 (RBP4).